The sequence spans 471 residues: MAAGVDEKDKKTIVFLHPDLGIGGAERLVVDAAVGLQNRGHKVVIFTSHCDPRHCFDEARDGTLDVRVRGNSIIPPSLLGRFSILCAILRQLHLILQITLLTSELRTLSPSAFFVDQLSAGLPLLKLLVPTSPIFFYCHFPDLLLVQGRQTWYKRLYRLPFDTWEEWSMGFADSIAVNSSFTKGIVSHTWPSLASKRSLEVVHPCIDVRSTSDSSQNPNDDDKDVLPWTKTGIILSINRFERKKDIALAIKAFASLSPEQRGKAKLIIAGGYDNRVHENVSYHMDLVDLAEGAPYHLKTATAKTVVSALNTSPDVEVLFLLSVPNTLKEILLRSAKLLVYTPSNEHFGIVPLEAMLRGVPVLAANNGGPTETVVEGETGWLRDPNDVGEWAKVMDKVLNGMGEEELKRMGKKGVERVKGRFADTQMAERLEEIIERMPKGDAAQSGMILLVVGAAVAAVAGVISAVYWKLW.

N-linked (GlcNAc...) asparagine glycosylation is found at Asn-178 and Asn-279. A helical membrane pass occupies residues 446–466 (GMILLVVGAAVAAVAGVISAV).

Belongs to the glycosyltransferase group 1 family. Glycosyltransferase 4 subfamily.

It localises to the endoplasmic reticulum membrane. The catalysed reaction is a beta-D-Man-(1-&gt;4)-beta-D-GlcNAc-(1-&gt;4)-alpha-D-GlcNAc-diphospho-di-trans,poly-cis-dolichol + GDP-alpha-D-mannose = an alpha-D-Man-(1-&gt;3)-beta-D-Man-(1-&gt;4)-beta-D-GlcNAc-(1-&gt;4)-alpha-D-GlcNAc-diphospho-di-trans,poly-cis-dolichol + GDP + H(+). It catalyses the reaction an alpha-D-Man-(1-&gt;3)-beta-D-Man-(1-&gt;4)-beta-D-GlcNAc-(1-&gt;4)-alpha-D-GlcNAc-diphospho-di-trans,poly-cis-dolichol + GDP-alpha-D-mannose = an alpha-D-Man-(1-&gt;3)-[alpha-D-Man-(1-&gt;6)]-beta-D-Man-(1-&gt;4)-beta-D-GlcNAc-(1-&gt;4)-alpha-D-GlcNAc-diphospho-di-trans,poly-cis-dolichol + GDP + H(+). Its pathway is protein modification; protein glycosylation. In terms of biological role, mannosylates Man(2)GlcNAc(2)-dolichol diphosphate and Man(1)GlcNAc(2)-dolichol diphosphate to form Man(3)GlcNAc(2)-dolichol diphosphate. The protein is Alpha-1,3/1,6-mannosyltransferase alg-2 (alg-2) of Neurospora crassa (strain ATCC 24698 / 74-OR23-1A / CBS 708.71 / DSM 1257 / FGSC 987).